The sequence spans 446 residues: Exodeoxyribonuclease 7 large subunit (446 aa).

The protein belongs to the XseA family. Heterooligomer composed of large and small subunits.

It is found in the cytoplasm. The catalysed reaction is Exonucleolytic cleavage in either 5'- to 3'- or 3'- to 5'-direction to yield nucleoside 5'-phosphates.. In terms of biological role, bidirectionally degrades single-stranded DNA into large acid-insoluble oligonucleotides, which are then degraded further into small acid-soluble oligonucleotides. This Streptococcus agalactiae serotype Ia (strain ATCC 27591 / A909 / CDC SS700) protein is Exodeoxyribonuclease 7 large subunit.